The following is a 1058-amino-acid chain: Carbamoyl phosphate synthase large chain (1058 aa).

The interval 1–401 is carboxyphosphate synthetic domain; the sequence is MPKRKDIQKI…SLLKACRSLE (401 aa). ATP is bound by residues Arg129, Arg169, Gly175, Gly176, Arg208, Ile210, Glu215, Gly241, Ile242, His243, Gln284, and Glu298. An ATP-grasp 1 domain is found at 133 to 327; the sequence is KQLMQELDQP…IAKLAAKIAV (195 aa). Mg(2+) contacts are provided by Gln284, Glu298, and Asn300. Positions 284, 298, and 300 each coordinate Mn(2+). An oligomerization domain region spans residues 402–546; that stretch reads IGVCHNEMTS…YSTYELENES (145 aa). The segment at 547–929 is carbamoyl phosphate synthetic domain; it reads VQSNKESILV…ALYKAFEANN (383 aa). The region spanning 671-861 is the ATP-grasp 2 domain; sequence EKALKELGIP…MAQIATKLIL (191 aa). 10 residues coordinate ATP: Arg707, Ser746, Ile748, Glu752, Gly777, Val778, His779, Ser780, Gln820, and Glu832. Mg(2+) is bound by residues Gln820, Glu832, and Asn834. 3 residues coordinate Mn(2+): Gln820, Glu832, and Asn834. An MGS-like domain is found at 930-1058; that stretch reads SHLSEFGQIV…ESRCFNIEAI (129 aa). The tract at residues 930–1058 is allosteric domain; it reads SHLSEFGQIV…ESRCFNIEAI (129 aa).

This sequence belongs to the CarB family. As to quaternary structure, composed of two chains; the small (or glutamine) chain promotes the hydrolysis of glutamine to ammonia, which is used by the large (or ammonia) chain to synthesize carbamoyl phosphate. Tetramer of heterodimers (alpha,beta)4. It depends on Mg(2+) as a cofactor. Mn(2+) serves as cofactor.

The catalysed reaction is hydrogencarbonate + L-glutamine + 2 ATP + H2O = carbamoyl phosphate + L-glutamate + 2 ADP + phosphate + 2 H(+). It catalyses the reaction hydrogencarbonate + NH4(+) + 2 ATP = carbamoyl phosphate + 2 ADP + phosphate + 2 H(+). It participates in amino-acid biosynthesis; L-arginine biosynthesis; carbamoyl phosphate from bicarbonate: step 1/1. It functions in the pathway pyrimidine metabolism; UMP biosynthesis via de novo pathway; (S)-dihydroorotate from bicarbonate: step 1/3. Functionally, large subunit of the glutamine-dependent carbamoyl phosphate synthetase (CPSase). CPSase catalyzes the formation of carbamoyl phosphate from the ammonia moiety of glutamine, carbonate, and phosphate donated by ATP, constituting the first step of 2 biosynthetic pathways, one leading to arginine and/or urea and the other to pyrimidine nucleotides. The large subunit (synthetase) binds the substrates ammonia (free or transferred from glutamine from the small subunit), hydrogencarbonate and ATP and carries out an ATP-coupled ligase reaction, activating hydrogencarbonate by forming carboxy phosphate which reacts with ammonia to form carbamoyl phosphate. The polypeptide is Carbamoyl phosphate synthase large chain (Streptococcus pyogenes serotype M1).